A 182-amino-acid polypeptide reads, in one-letter code: UPF0149 protein PM1723 (182 aa).

Belongs to the UPF0149 family.

The sequence is that of UPF0149 protein PM1723 from Pasteurella multocida (strain Pm70).